A 449-amino-acid polypeptide reads, in one-letter code: MEHKRGHVLAVPYPTQGHITPFRQFCKRLHFKGLKTTLALTTFVFNSINPDLSGPISIATISDGYDHGGFETADSIDDYLKDFKTSGSKTIADIIQKHQTSDNPITCIVYDAFLPWALDVAREFGLVATPFFTQPCAVNYVYYLSYINNGSLQLPIEELPFLELQDLPSFFSVSGSYPAYFEMVLQQFINFEKADFVLVNSFQELELHENELWSKACPVLTIGPTIPSIYLDQRIKSDTGYDLNLFESKDDSFCINWLDTRPQGSVVYVAFGSMAQLTNVQMEELASAVSNFSFLWVVRSSEEEKLPSGFLETVNKEKSLVLKWSPQLQVLSNKAIGCFLTHCGWNSTMEALTFGVPMVAMPQWTDQPMNAKYIQDVWKAGVRVKTEKESGIAKREEIEFSIKEVMEGERSKEMKKNVKKWRDLAVKSLNEGGSTDTNIDTFVSRVQSK.

UDP-alpha-D-glucose is bound by residues S273, 325–327, 342–350, and 364–367; these read SPQ, HCGWNSTME, and WTDQ.

This sequence belongs to the UDP-glycosyltransferase family. As to expression, expressed in seedlings.

In terms of biological role, glycosyltransferase that glucosylates benzoic acid and derivatives. Substrate preference is benzoic acid &gt; salicylic acid (SA) &gt; 3-hydroxybenzoic acid &gt; 4-hydroxybenzoic acid. Catalyzes the formation of both SA 2-O-beta-D-glucoside (SAG) and SA glucose ester (SGE). Has high affinity for the tryptophan precursor anthranilate. Catalyzes the formation of anthranilate glucose ester. Is the major source of this activity in the plant. In Arabidopsis thaliana (Mouse-ear cress), this protein is UDP-glycosyltransferase 74F2 (UGT74F2).